Reading from the N-terminus, the 137-residue chain is Phosphoribosyl-AMP cyclohydrolase (137 aa).

Asp84 contributes to the Mg(2+) binding site. Residue Cys85 coordinates Zn(2+). Residues Asp86 and Asp88 each coordinate Mg(2+). Residues Cys101 and Cys108 each contribute to the Zn(2+) site.

This sequence belongs to the PRA-CH family. Homodimer. It depends on Mg(2+) as a cofactor. Requires Zn(2+) as cofactor.

The protein resides in the cytoplasm. The catalysed reaction is 1-(5-phospho-beta-D-ribosyl)-5'-AMP + H2O = 1-(5-phospho-beta-D-ribosyl)-5-[(5-phospho-beta-D-ribosylamino)methylideneamino]imidazole-4-carboxamide. It participates in amino-acid biosynthesis; L-histidine biosynthesis; L-histidine from 5-phospho-alpha-D-ribose 1-diphosphate: step 3/9. Its function is as follows. Catalyzes the hydrolysis of the adenine ring of phosphoribosyl-AMP. The polypeptide is Phosphoribosyl-AMP cyclohydrolase (Pelodictyon phaeoclathratiforme (strain DSM 5477 / BU-1)).